A 429-amino-acid polypeptide reads, in one-letter code: Zinc-regulated GTPase metalloprotein activator 1 (429 aa).

The psi-PxLVp motif motif lies at glycine 15–threonine 22. Glycine 78–serine 85 serves as a coordination point for GTP. Zn(2+) contacts are provided by cysteine 136, cysteine 138, and cysteine 139. A CXCC motif motif is present at residues cysteine 136–cysteine 139. GTP-binding positions include cysteine 139–asparagine 143 and asparagine 244–aspartate 247. One can recognise a CobW C-terminal domain in the interval arginine 362–leucine 428.

This sequence belongs to the SIMIBI class G3E GTPase family. ZNG1 subfamily.

It catalyses the reaction GTP + H2O = GDP + phosphate + H(+). In terms of biological role, zinc chaperone that directly transfers zinc cofactor to target metalloproteins, thereby activating them. Catalyzes zinc insertion into the active site of methionine aminopeptidase MAP1, which function to cleave the initiator methionine from polypeptides during or after protein translation. Mechanistically, the N-terminal psi-PxLVp motif binds to the C6H2-type zinc finger of inactive form of MAP1. After formation of the docked complex, zinc is transferred from the CXCC motif in the GTPase domain of ZNG1 to the zinc binding site in the peptidase domain of MAP1 in a process requiring GTP hydrolysis. GTP/GDP exchange is required for release of active MAP1. The chain is Zinc-regulated GTPase metalloprotein activator 1 from Saccharomyces cerevisiae (strain ATCC 204508 / S288c) (Baker's yeast).